A 349-amino-acid polypeptide reads, in one-letter code: MSALSGKVQTVLGPIEPDQLGRTMTHEHLTMTFECCYFSPAPGDETVAQAPIQMKNLFWLKQNPYSSHENLLLLQETNAVREELHEYRKAGGGTIVENTTQGIARDLPCLKQLAKESGVHIIGGAGYYVDATHSEATRKMTVEKLTDIIISEVLHGADGTEIRCGVIGEIGCSWPITDSEKKVLQATAHAQTELGCPVIIHPGRNPGAPAEIVRLLQEAGGDISKTVMSHLDRTIFDNGELLEFAKMGSYLEYDLFGMETLNYAYNLEVDMPSDSQRVKALAFLVQEGYEDNIVIAHDIHTKNRLTKYGGHGYSHILKNIVPKMLKRGINQTQVDKILIDNPKRWLTFK.

A divalent metal cation-binding residues include His26, His28, Glu169, His201, His230, and Asp298.

Belongs to the metallo-dependent hydrolases superfamily. Phosphotriesterase family. It depends on a divalent metal cation as a cofactor.

It is found in the cytoplasm. Its subcellular location is the cytosol. It carries out the reaction N-acetyltaurine + H2O = taurine + acetate. The enzyme catalyses N-propanoyltaurine + H2O = propanoate + taurine. The catalysed reaction is N-acetyl-L-methionine + H2O = L-methionine + acetate. It catalyses the reaction N-acetyl-L-isoleucine + H2O = L-isoleucine + acetate. It carries out the reaction N-acetyl-L-leucine + H2O = L-leucine + acetate. The enzyme catalyses N-acetyl-L-valine + H2O = L-valine + acetate. Its function is as follows. N-acetyltaurine hydrolase that catalyzes the hydrolysis of N-acetyltaurine into taurine and acetate. PTER also acts on other N-acetyl amino acids (Met, Ile, Leu, Val) and N-propionyltaurine, but at lower rates. The sequence is that of N-acetyltaurine hydrolase (pter) from Salmo salar (Atlantic salmon).